A 499-amino-acid polypeptide reads, in one-letter code: Glycerol kinase (499 aa).

Residue Thr12 participates in ADP binding. Residues Thr12, Thr13, and Ser14 each coordinate ATP. Thr12 serves as a coordination point for sn-glycerol 3-phosphate. Arg16 serves as a coordination point for ADP. Positions 82, 83, and 134 each coordinate sn-glycerol 3-phosphate. Arg82, Glu83, and Tyr134 together coordinate glycerol. At His230 the chain carries Phosphohistidine; by HPr. Asp244 contributes to the sn-glycerol 3-phosphate binding site. Asp244 and Gln245 together coordinate glycerol. ADP contacts are provided by Thr266 and Gly309. Positions 266, 309, 313, and 410 each coordinate ATP. ADP-binding residues include Gly410 and Asn414.

It belongs to the FGGY kinase family. In terms of assembly, homotetramer and homodimer (in equilibrium). The phosphoenolpyruvate-dependent sugar phosphotransferase system (PTS), including enzyme I, and histidine-containing protein (HPr) are required for the phosphorylation, which leads to the activation of the enzyme.

The catalysed reaction is glycerol + ATP = sn-glycerol 3-phosphate + ADP + H(+). The protein operates within polyol metabolism; glycerol degradation via glycerol kinase pathway; sn-glycerol 3-phosphate from glycerol: step 1/1. Its activity is regulated as follows. Activated by phosphorylation and inhibited by fructose 1,6-bisphosphate (FBP). Functionally, key enzyme in the regulation of glycerol uptake and metabolism. Catalyzes the phosphorylation of glycerol to yield sn-glycerol 3-phosphate. This chain is Glycerol kinase, found in Staphylococcus epidermidis (strain ATCC 12228 / FDA PCI 1200).